Here is a 440-residue protein sequence, read N- to C-terminus: Adenylosuccinate synthetase (440 aa).

GTP is bound by residues 13–19 and 41–43; these read GDEGKGK and GHT. Residue Asp14 is the Proton acceptor of the active site. Residues Asp14 and Gly41 each contribute to the Mg(2+) site. Residues 14–17, 39–42, Thr135, Arg149, Gln230, Thr245, and Arg313 each bind IMP; these read DEGK and NAGH. His42 serves as the catalytic Proton donor. 309-315 serves as a coordination point for substrate; sequence TVTKRKR. GTP is bound by residues Arg315, 341–343, and 423–425; these read KLD and STG.

Belongs to the adenylosuccinate synthetase family. Homodimer. The cofactor is Mg(2+).

The protein localises to the cytoplasm. It carries out the reaction IMP + L-aspartate + GTP = N(6)-(1,2-dicarboxyethyl)-AMP + GDP + phosphate + 2 H(+). Its pathway is purine metabolism; AMP biosynthesis via de novo pathway; AMP from IMP: step 1/2. Its function is as follows. Plays an important role in the de novo pathway of purine nucleotide biosynthesis. Catalyzes the first committed step in the biosynthesis of AMP from IMP. The polypeptide is Adenylosuccinate synthetase (Methylobacillus flagellatus (strain ATCC 51484 / DSM 6875 / VKM B-1610 / KT)).